The primary structure comprises 520 residues: Maturase K (520 aa).

This sequence belongs to the intron maturase 2 family. MatK subfamily.

The protein localises to the plastid. It is found in the chloroplast. Its function is as follows. Usually encoded in the trnK tRNA gene intron. Probably assists in splicing its own and other chloroplast group II introns. In Iris cristata (Dwarf crested iris), this protein is Maturase K.